The sequence spans 339 residues: SVP1-like protein 2 (339 aa).

WD repeat units lie at residues 177–217 and 222–261; these read AHAN…LVRE and LDRTSIIDMRWSPDGSKLAVVSDKWTLHVFEVFNDAENKR.

It belongs to the WD repeat PROPPIN family.

The protein localises to the vacuole membrane. It is found in the cytoplasmic vesicle membrane. Involved in mitochondrial or peroxisomal functions and amino acid signaling pathways. This is SVP1-like protein 2 (HSV2) from Kluyveromyces lactis (strain ATCC 8585 / CBS 2359 / DSM 70799 / NBRC 1267 / NRRL Y-1140 / WM37) (Yeast).